Consider the following 407-residue polypeptide: Tyrosine--tRNA ligase (407 aa).

Residue Y36 participates in L-tyrosine binding. A 'HIGH' region motif is present at residues 41 to 50 (PTADSLHIGH). The L-tyrosine site is built by Y169 and Q173. The short motif at 229–233 (KMGKT) is the 'KMSKS' region element. K232 provides a ligand contact to ATP. The 67-residue stretch at 341-407 (KGILDILVET…KKSYNRIVIE (67 aa)) folds into the S4 RNA-binding domain.

Belongs to the class-I aminoacyl-tRNA synthetase family. TyrS type 1 subfamily. Homodimer.

It localises to the cytoplasm. It catalyses the reaction tRNA(Tyr) + L-tyrosine + ATP = L-tyrosyl-tRNA(Tyr) + AMP + diphosphate + H(+). In terms of biological role, catalyzes the attachment of tyrosine to tRNA(Tyr) in a two-step reaction: tyrosine is first activated by ATP to form Tyr-AMP and then transferred to the acceptor end of tRNA(Tyr). The protein is Tyrosine--tRNA ligase of Clostridium tetani (strain Massachusetts / E88).